We begin with the raw amino-acid sequence, 824 residues long: Intraflagellar transport protein 88 homolog (824 aa).

Disordered stretches follow at residues methionine 1–aspartate 27 and alanine 111–glutamate 134. 11 TPR repeats span residues tyrosine 196–serine 229, glycine 232–valine 265, isoleucine 271–leucine 304, asparagine 415–valine 448, serine 450–asparagine 483, proline 484–cysteine 517, threonine 518–serine 551, alanine 552–aspartate 585, serine 586–asparagine 619, isoleucine 620–glutamine 653, and valine 654–asparagine 687. Basic and acidic residues predominate over residues glutamate 721 to arginine 731. The segment at glutamate 721–glutamate 824 is disordered. Positions aspartate 748 to serine 757 are enriched in polar residues. Residues glutamate 797–aspartate 808 show a composition bias toward basic and acidic residues. A compositionally biased stretch (acidic residues) spans glutamate 809 to glutamate 824.

In terms of assembly, component of the IFT complex B, at least composed of IFT20, IFT22, IFT25, IFT27, IFT46, IFT52, TRAF3IP1/IFT54, IFT57, IFT74, IFT80, IFT81, and IFT88. Interacts with IFT20, IFT22, IFT25, IFT27, IFT52, TRAF3IP1, IFT74, IFT80 and IFT81. Interacts with IFT172. Interacts with IFT57. Interacts with IFT46. Interacts with IFT70B. Interacts with C2CD3. Interacts with ENTR1 (via N-terminus). Interacts with LRRC56. Interacts with DZIP1. Interacts with CCDC38. Interacts with CCDC146. Interacts with CFAP53. In terms of tissue distribution, testis.

The protein resides in the cytoplasm. The protein localises to the cytoskeleton. Its subcellular location is the microtubule organizing center. It localises to the centrosome. It is found in the centriole. The protein resides in the cilium basal body. The protein localises to the cell projection. Its subcellular location is the cilium. It localises to the flagellum. Functionally, positively regulates primary cilium biogenesis. Also involved in autophagy since it is required for trafficking of ATG16L and the expansion of the autophagic compartment. The polypeptide is Intraflagellar transport protein 88 homolog (Ift88) (Mus musculus (Mouse)).